Reading from the N-terminus, the 187-residue chain is UPF0301 protein plu1183 (187 aa).

It belongs to the UPF0301 (AlgH) family.

This Photorhabdus laumondii subsp. laumondii (strain DSM 15139 / CIP 105565 / TT01) (Photorhabdus luminescens subsp. laumondii) protein is UPF0301 protein plu1183.